A 5098-amino-acid chain; its full sequence is Auxin transport protein BIG (5098 aa).

Ala2 carries the post-translational modification N-acetylalanine. A run of 2 helical transmembrane segments spans residues 1150-1170 and 1458-1478; these read AILL…NGLL and LAAE…IGTL. The segment covering 1539–1549 has biased composition (acidic residues); that stretch reads SVDEDEDDGTS. A disordered region spans residues 1539 to 1562; that stretch reads SVDEDEDDGTSDGEVASLDKEDEE. Residues 1573–1644 form a UBR-type zinc finger; the sequence is KVCTFTSSGS…RGSSCQCLKP (72 aa). The segment at 2613-2672 adopts a ZZ-type zinc-finger fold; that stretch reads SVQYCCDGCSTVPILRRRWHCTVCPDFDLCEACYEVLDADRLPPPHTRDHPMTAIPIEVE. Cys2618, Cys2621, Cys2633, Cys2636, Cys2642, Cys2645, His2658, and His2662 together coordinate Zn(2+). Residues 2813–2833 traverse the membrane as a helical segment; sequence SSLGEIVILVFMFFTLMLRSW. The interval 3149–3174 is disordered; sequence EVVTGSNRSGSQSVDSKKKKKGEDGH. A compositionally biased stretch (polar residues) spans 3151-3162; sequence VTGSNRSGSQSV. Residues 3464–3504 form an MYND-type; degenerate zinc finger; the sequence is CPRCSRPVTDKHGICSNCHENAYQCRQCRNINYENLDSFLC. Coiled coils occupy residues 3537–3557 and 4313–4333; these read KKGL…YQQL and LEIL…NQEE. Residues 4569–5098 are UBR4 E3 catalytic module; sequence PSVPLILSML…QFVRSAIDKD (530 aa). The segment at 4698-4817 adopts a HemiRING-type zinc-finger fold; sequence GLACMVCREG…WDNLNALGRA (120 aa). 4 residues coordinate Zn(2+): Cys4701, Cys4704, His4751, and Cys4754. The region spanning 4820–5098 is the UZI domain; that stretch reads SRLRLLTYDI…QFVRSAIDKD (279 aa). The segment covering 4891–4903 has biased composition (low complexity); sequence SSTSTATAPSSDS. A disordered region spans residues 4891–4915; sequence SSTSTATAPSSDSRPLTPGSQLSST.

It belongs to the UBR4 family. In terms of tissue distribution, constitutively expressed in roots, rosette leaves, inflorescence stems, and flowers. Present in inflorescence meristems, floral meristems and vascular tissues.

Its subcellular location is the membrane. Its function is as follows. Required for auxin efflux and polar auxin transport (PAT) influencing auxin-mediated developmental responses (e.g. cell elongation, apical dominance, lateral root production, inflorescence architecture, general growth and development). Controls the elongation of the pedicels and stem internodes through auxin action. Involved in the expression modulation of light-regulated genes. Represses CAB1 and CAB3 genes expression in etiolated seedlings. Confers sensitivity to the auxin transport inhibitors N-1-naphthylphthalamic acid (NPA), 2-carboxyphenyl-3-phenylpropane-l,2-dione (CPD), and methyl-2-chloro-9-hydroxyfluorene-9-carboxylate (CFM). Influences the polarized subcellular distribution of the auxin transporter PIN1 in response to auxin transport inhibitors. Plays a role in the regulation of responses to phytohormones such as auxin, cytokinins, ethylene and gibberellic acid (GA), particularly during light-mediated stimuli (e.g. shade ovoidance, etiolation). Required for pericycle cell activation to form lateral root primordia (LRP) in both high and low phosphate P conditions. Necessary for the plant-growth promotion and lateral root development mediated by the fungus Trichoderma virens. In Arabidopsis thaliana (Mouse-ear cress), this protein is Auxin transport protein BIG (BIG).